The following is a 155-amino-acid chain: 6,7-dimethyl-8-ribityllumazine synthase (155 aa).

5-amino-6-(D-ribitylamino)uracil is bound by residues phenylalanine 23, 57–59, and 81–83; these read AFE and AVI. Position 86 to 87 (86 to 87) interacts with (2S)-2-hydroxy-3-oxobutyl phosphate; sequence ST. Histidine 89 (proton donor) is an active-site residue. Phenylalanine 114 contacts 5-amino-6-(D-ribitylamino)uracil. (2S)-2-hydroxy-3-oxobutyl phosphate is bound at residue arginine 128.

Belongs to the DMRL synthase family.

The catalysed reaction is (2S)-2-hydroxy-3-oxobutyl phosphate + 5-amino-6-(D-ribitylamino)uracil = 6,7-dimethyl-8-(1-D-ribityl)lumazine + phosphate + 2 H2O + H(+). It functions in the pathway cofactor biosynthesis; riboflavin biosynthesis; riboflavin from 2-hydroxy-3-oxobutyl phosphate and 5-amino-6-(D-ribitylamino)uracil: step 1/2. Its function is as follows. Catalyzes the formation of 6,7-dimethyl-8-ribityllumazine by condensation of 5-amino-6-(D-ribitylamino)uracil with 3,4-dihydroxy-2-butanone 4-phosphate. This is the penultimate step in the biosynthesis of riboflavin. The polypeptide is 6,7-dimethyl-8-ribityllumazine synthase (Dehalococcoides mccartyi (strain ATCC BAA-2266 / KCTC 15142 / 195) (Dehalococcoides ethenogenes (strain 195))).